The sequence spans 223 residues: Triosephosphate isomerase (223 aa).

6-8 (NLK) contacts substrate. The active-site Electrophile is histidine 86. The active-site Proton acceptor is the glutamate 151. Positions 157 and 187 each coordinate substrate.

This sequence belongs to the triosephosphate isomerase family. In terms of assembly, homodimer.

The protein localises to the cytoplasm. It carries out the reaction D-glyceraldehyde 3-phosphate = dihydroxyacetone phosphate. It functions in the pathway carbohydrate biosynthesis; gluconeogenesis. Its pathway is carbohydrate degradation; glycolysis; D-glyceraldehyde 3-phosphate from glycerone phosphate: step 1/1. Functionally, involved in the gluconeogenesis. Catalyzes stereospecifically the conversion of dihydroxyacetone phosphate (DHAP) to D-glyceraldehyde-3-phosphate (G3P). The chain is Triosephosphate isomerase from Campylobacter jejuni subsp. jejuni serotype O:2 (strain ATCC 700819 / NCTC 11168).